Reading from the N-terminus, the 130-residue chain is Small ribosomal subunit protein uS8 (130 aa).

The protein belongs to the universal ribosomal protein uS8 family. As to quaternary structure, part of the 30S ribosomal subunit. Contacts proteins S5 and S12.

Its function is as follows. One of the primary rRNA binding proteins, it binds directly to 16S rRNA central domain where it helps coordinate assembly of the platform of the 30S subunit. This chain is Small ribosomal subunit protein uS8, found in Shigella boydii serotype 18 (strain CDC 3083-94 / BS512).